Here is a 105-residue protein sequence, read N- to C-terminus: Nucleoid-associated protein PTH_0052 (105 aa).

This sequence belongs to the YbaB/EbfC family. As to quaternary structure, homodimer.

It is found in the cytoplasm. The protein localises to the nucleoid. In terms of biological role, binds to DNA and alters its conformation. May be involved in regulation of gene expression, nucleoid organization and DNA protection. This chain is Nucleoid-associated protein PTH_0052, found in Pelotomaculum thermopropionicum (strain DSM 13744 / JCM 10971 / SI).